Here is a 454-residue protein sequence, read N- to C-terminus: MSRPTVSLIVLAAGQGTRMNSDLPKVLHRVGAAPMLHHALRAGQSLEPERVVVVAGHGAEQVARAARAFDETVEVVVQAEQLGTAHAVAQAAPLLADAPGEVVVLYGDTPFIRPETLERMIEMRARHAVVVLGFEAADPGRYGRLVTRGEDLDRIVEWKDATDEERAITLCNSGVICAETHLLFSLVSEVGNANAAGEYYLTDVVALARAKGLSAGVAICDEAETLGVNTRAQLAAAEAEFQRRARAAALEDGVTLTAPDTVFFALDTFLGRDAIVGPNVVFGPGVTVESGAEIRAFCHLEGCHISRGATVGPFARLRPGAELAEDVHVGNFVEIKNAVLDEGVKVGHLTYLGDAHVGEHTNIGAGTVTCNYDGVNKHRTEIGAHAFIGSDTMLVAPVSVGARAMTASGSVITEDVPAEALAVGRARQVTKPGLATRLMEMFRAARDASKKGTN.

The tract at residues 1-231 (MSRPTVSLIV…EAETLGVNTR (231 aa)) is pyrophosphorylase. UDP-N-acetyl-alpha-D-glucosamine-binding positions include 11-14 (LAAG), Lys25, Gln78, 83-84 (GT), 106-108 (YGD), Gly143, Glu157, Asn172, and Asn229. Asp108 is a binding site for Mg(2+). A Mg(2+)-binding site is contributed by Asn229. Residues 232–252 (AQLAAAEAEFQRRARAAALED) form a linker region. Residues 253–454 (GVTLTAPDTV…ARDASKKGTN (202 aa)) form an N-acetyltransferase region. UDP-N-acetyl-alpha-D-glucosamine is bound by residues Arg318 and Lys336. Residue His348 is the Proton acceptor of the active site. UDP-N-acetyl-alpha-D-glucosamine is bound by residues Tyr351 and Asn362. Acetyl-CoA is bound by residues Ala365, 371–372 (NY), Ser390, Ser408, and Arg425.

This sequence in the N-terminal section; belongs to the N-acetylglucosamine-1-phosphate uridyltransferase family. It in the C-terminal section; belongs to the transferase hexapeptide repeat family. Homotrimer. Requires Mg(2+) as cofactor.

It localises to the cytoplasm. The catalysed reaction is alpha-D-glucosamine 1-phosphate + acetyl-CoA = N-acetyl-alpha-D-glucosamine 1-phosphate + CoA + H(+). It catalyses the reaction N-acetyl-alpha-D-glucosamine 1-phosphate + UTP + H(+) = UDP-N-acetyl-alpha-D-glucosamine + diphosphate. It participates in nucleotide-sugar biosynthesis; UDP-N-acetyl-alpha-D-glucosamine biosynthesis; N-acetyl-alpha-D-glucosamine 1-phosphate from alpha-D-glucosamine 6-phosphate (route II): step 2/2. Its pathway is nucleotide-sugar biosynthesis; UDP-N-acetyl-alpha-D-glucosamine biosynthesis; UDP-N-acetyl-alpha-D-glucosamine from N-acetyl-alpha-D-glucosamine 1-phosphate: step 1/1. The protein operates within bacterial outer membrane biogenesis; LPS lipid A biosynthesis. Functionally, catalyzes the last two sequential reactions in the de novo biosynthetic pathway for UDP-N-acetylglucosamine (UDP-GlcNAc). The C-terminal domain catalyzes the transfer of acetyl group from acetyl coenzyme A to glucosamine-1-phosphate (GlcN-1-P) to produce N-acetylglucosamine-1-phosphate (GlcNAc-1-P), which is converted into UDP-GlcNAc by the transfer of uridine 5-monophosphate (from uridine 5-triphosphate), a reaction catalyzed by the N-terminal domain. This is Bifunctional protein GlmU from Cereibacter sphaeroides (strain ATCC 17025 / ATH 2.4.3) (Rhodobacter sphaeroides).